The following is a 252-amino-acid chain: Large ribosomal subunit protein uL10m (252 aa).

The N-terminal 24 residues, 1 to 24 (MAATLCCRLLPKAGWVPLTQSVRH), are a transit peptide targeting the mitochondrion.

Belongs to the universal ribosomal protein uL10 family. In terms of assembly, component of the mitochondrial ribosome large subunit (39S) which comprises a 16S rRNA and about 50 distinct proteins.

Its subcellular location is the mitochondrion. This Danio rerio (Zebrafish) protein is Large ribosomal subunit protein uL10m (mrpl10).